The following is a 210-amino-acid chain: NAD(P)H-quinone oxidoreductase subunit I (210 aa).

4Fe-4S ferredoxin-type domains follow at residues 54–83 (GRIH…VDWA) and 94–123 (YSYS…VTED). 8 residues coordinate [4Fe-4S] cluster: C63, C66, C69, C73, C103, C106, C109, and C113.

Belongs to the complex I 23 kDa subunit family. As to quaternary structure, NDH-1 is composed of at least 11 different subunits. Requires [4Fe-4S] cluster as cofactor.

The protein resides in the cellular thylakoid membrane. The enzyme catalyses a plastoquinone + NADH + (n+1) H(+)(in) = a plastoquinol + NAD(+) + n H(+)(out). It carries out the reaction a plastoquinone + NADPH + (n+1) H(+)(in) = a plastoquinol + NADP(+) + n H(+)(out). NDH-1 shuttles electrons from an unknown electron donor, via FMN and iron-sulfur (Fe-S) centers, to quinones in the respiratory and/or the photosynthetic chain. The immediate electron acceptor for the enzyme in this species is believed to be plastoquinone. Couples the redox reaction to proton translocation, and thus conserves the redox energy in a proton gradient. The polypeptide is NAD(P)H-quinone oxidoreductase subunit I (Synechococcus sp. (strain JA-2-3B'a(2-13)) (Cyanobacteria bacterium Yellowstone B-Prime)).